Consider the following 141-residue polypeptide: uncharacterized protein (141 aa).

This is an uncharacterized protein from Homo sapiens (Human).